Reading from the N-terminus, the 341-residue chain is UDP-N-acetylenolpyruvoylglucosamine reductase (341 aa).

The 171-residue stretch at 12-182 (LSAYAKRLDI…ISVGLLLKKN (171 aa)) folds into the FAD-binding PCMH-type domain. Arg158 is an active-site residue. The active-site Proton donor is Ser228. Glu324 is an active-site residue.

It belongs to the MurB family. The cofactor is FAD.

The protein localises to the cytoplasm. The enzyme catalyses UDP-N-acetyl-alpha-D-muramate + NADP(+) = UDP-N-acetyl-3-O-(1-carboxyvinyl)-alpha-D-glucosamine + NADPH + H(+). Its pathway is cell wall biogenesis; peptidoglycan biosynthesis. Its function is as follows. Cell wall formation. This chain is UDP-N-acetylenolpyruvoylglucosamine reductase, found in Photorhabdus laumondii subsp. laumondii (strain DSM 15139 / CIP 105565 / TT01) (Photorhabdus luminescens subsp. laumondii).